Consider the following 381-residue polypeptide: Chaperone protein DnaJ (381 aa).

The J domain occupies 4 to 69; it reads DYYEILGVTR…QKRAAYDRFG (66 aa). The CR-type zinc-finger motif lies at 135–213; sequence GKTAQINIPS…CQGTRRVEKN (79 aa). Cysteine 148, cysteine 151, cysteine 165, cysteine 168, cysteine 187, cysteine 190, cysteine 201, and cysteine 204 together coordinate Zn(2+). CXXCXGXG motif repeat units lie at residues 148–155, 165–172, 187–194, and 201–208; these read CDACEGSG, CGTCHGAG, CPVCHGRG, and CPKCQGTR.

Belongs to the DnaJ family. In terms of assembly, homodimer. Requires Zn(2+) as cofactor.

It localises to the cytoplasm. Functionally, participates actively in the response to hyperosmotic and heat shock by preventing the aggregation of stress-denatured proteins and by disaggregating proteins, also in an autonomous, DnaK-independent fashion. Unfolded proteins bind initially to DnaJ; upon interaction with the DnaJ-bound protein, DnaK hydrolyzes its bound ATP, resulting in the formation of a stable complex. GrpE releases ADP from DnaK; ATP binding to DnaK triggers the release of the substrate protein, thus completing the reaction cycle. Several rounds of ATP-dependent interactions between DnaJ, DnaK and GrpE are required for fully efficient folding. Also involved, together with DnaK and GrpE, in the DNA replication of plasmids through activation of initiation proteins. The sequence is that of Chaperone protein DnaJ from Bartonella henselae (strain ATCC 49882 / DSM 28221 / CCUG 30454 / Houston 1) (Rochalimaea henselae).